Here is a 223-residue protein sequence, read N- to C-terminus: Urease accessory protein UreF (223 aa).

The protein belongs to the UreF family. In terms of assembly, ureD, UreF and UreG form a complex that acts as a GTP-hydrolysis-dependent molecular chaperone, activating the urease apoprotein by helping to assemble the nickel containing metallocenter of UreC. The UreE protein probably delivers the nickel.

It is found in the cytoplasm. In terms of biological role, required for maturation of urease via the functional incorporation of the urease nickel metallocenter. The protein is Urease accessory protein UreF of Paenarthrobacter aurescens (strain TC1).